We begin with the raw amino-acid sequence, 316 residues long: Homoserine kinase (316 aa).

Residue 96 to 106 (PHGRGLGSSGA) coordinates ATP.

This sequence belongs to the GHMP kinase family. Homoserine kinase subfamily.

It is found in the cytoplasm. It carries out the reaction L-homoserine + ATP = O-phospho-L-homoserine + ADP + H(+). It participates in amino-acid biosynthesis; L-threonine biosynthesis; L-threonine from L-aspartate: step 4/5. In terms of biological role, catalyzes the ATP-dependent phosphorylation of L-homoserine to L-homoserine phosphate. The chain is Homoserine kinase from Clavibacter michiganensis subsp. michiganensis (strain NCPPB 382).